The chain runs to 147 residues: Ubiquitin-like-conjugating enzyme ATG10 (147 aa).

Cys116 (glycyl thioester intermediate) is an active-site residue.

This sequence belongs to the ATG10 family. In terms of assembly, forms homooligomers. Interacts with ATG10. Interacts with ATG7 and ATG12.

The protein resides in the preautophagosomal structure membrane. In terms of biological role, E2-like enzyme required for the cytoplasm to vacuole transport (Cvt), autophagy and nucleophagy. Acts as an E2-like enzyme that catalyzes the conjugation of ATG12 to ATG5. ATG12 conjugation to ATG5 is required for proper localization of ATG8 to the preautophagosomal structure (PAS). Likely serves as an ATG5-recognition molecule. This chain is Ubiquitin-like-conjugating enzyme ATG10, found in Kluyveromyces marxianus (strain DMKU3-1042 / BCC 29191 / NBRC 104275) (Yeast).